The following is an 852-amino-acid chain: Aconitate hydratase B (852 aa).

Substrate-binding positions include arginine 194, 237–239 (SSR), 405–407 (QDT), and serine 489. Cysteine 708, cysteine 766, and cysteine 769 together coordinate [4Fe-4S] cluster. Positions 788 and 793 each coordinate substrate.

This sequence belongs to the aconitase/IPM isomerase family. Monomer. [4Fe-4S] cluster is required as a cofactor.

It catalyses the reaction citrate = D-threo-isocitrate. The catalysed reaction is (2S,3R)-3-hydroxybutane-1,2,3-tricarboxylate = 2-methyl-cis-aconitate + H2O. It functions in the pathway carbohydrate metabolism; tricarboxylic acid cycle; isocitrate from oxaloacetate: step 2/2. Its pathway is organic acid metabolism; propanoate degradation. Functionally, involved in the catabolism of short chain fatty acids (SCFA) via the tricarboxylic acid (TCA)(acetyl degradation route) and probably via the 2-methylcitrate cycle I (propionate degradation route). Catalyzes the reversible isomerization of citrate to isocitrate via cis-aconitate. Catalyzes the hydration of 2-methyl-cis-aconitate to yield (2R,3S)-2-methylisocitrate. The apo form of AcnB functions as a RNA-binding regulatory protein. This is Aconitate hydratase B (acnB) from Helicobacter pylori (strain J99 / ATCC 700824) (Campylobacter pylori J99).